A 797-amino-acid chain; its full sequence is MKLKQIASALMMLGISPLALADFTIQDIRVEGLQRTEPSTVFNYLPVKVGDTYNDTHGSAIIKSLYATGFFDDVRVETADGQLLLTVIERPTIGSLNITGAKMLQNDAIKKNLESFGLAQSQYFNQATLNQAVAGLKEEYLGRGKLNIQITPKVTKLARNRVDIDITIDEGKSAKITDIEFEGNQVYSDRKLMRQMSLTEGGIWTWLTRSNQFNEQKFAQDMEKVTDFYQNNGYFDFRILDTDIQTNEDKTKQTIKITVHEGGRFRWGKVSIEGDTNEVPKAELEKLLTMKPGKWYERQQMTAVLGEIQNRMGSAGYAYSEISVQPLPNAETKTVDFVLHIEPGRKIYVNEIHITGNNKTRDEVVRRELRQMESAPYDTSKLQRSKERVELLGYFDNVQFDAVPLAGTPDKVDLNMSLTERSTGSLDLSAGWVQDTGLVMSAGVSQDNLFGTGKSAALRASRSKTTLNGSLSFTDPYFTADGVSLGYDVYGKAFDPRKASTSIKQYKTTTAGAGIRMSVPVTEYDRVNFGLVAEHLTVNTYNKAPKHYADFIKKYGKTDGTDGSFKGWLYKGTVGWGRNKTDSALWPTRGYLTGVNAEIALPGSKLQYYSATHNQTWFFPLSKTFTLMLGGEVGIAGGYGRTKEIPFFENFYGGGLGSVRGYESGTLGPKVYDEYGEKISYGGNKKANVSAELLFPMPGAKDARTVRLSLFADAGSVWDGKTYDDNSSSATGGRVQNIYGAGNTHKSTFTNELRYSAGGAVTWLSPLGPMKFSYAYPLKKKPEDEIQRFQFQLGTTF.

The N-terminal stretch at 1 to 21 (MKLKQIASALMMLGISPLALA) is a signal peptide. 5 consecutive POTRA domains span residues 23–90 (FTIQ…VIER), 91–171 (PTIG…IDEG), 174–262 (AKIT…VHEG), 265–344 (FRWG…IEPG), and 347–421 (IYVN…LTER).

Belongs to the BamA family. Part of the Bam complex.

Its subcellular location is the cell outer membrane. Its function is as follows. Part of the outer membrane protein assembly complex, which is involved in assembly and insertion of beta-barrel proteins into the outer membrane. The sequence is that of Outer membrane protein assembly factor BamA from Neisseria meningitidis serogroup B (strain ATCC BAA-335 / MC58).